The chain runs to 476 residues: Ribulose bisphosphate carboxylase large chain (476 aa).

Asn124 and Thr174 together coordinate substrate. The active-site Proton acceptor is Lys176. Position 178 (Lys178) interacts with substrate. Mg(2+) is bound by residues Lys202, Asp204, and Glu205. An N6-carboxylysine modification is found at Lys202. His295 functions as the Proton acceptor in the catalytic mechanism. Positions 296, 328, and 380 each coordinate substrate.

Belongs to the RuBisCO large chain family. Type I subfamily. In terms of assembly, heterohexadecamer of 8 large chains and 8 small chains; disulfide-linked. The disulfide link is formed within the large subunit homodimers. Forms complexes of many stoichiometries with Raf1 with and without RbcS. RuBisCO interacts with the C-terminus of CcmM. Mg(2+) is required as a cofactor. In terms of processing, the disulfide bond which can form in the large chain dimeric partners within the hexadecamer appears to be associated with oxidative stress and protein turnover.

It is found in the carboxysome. It carries out the reaction 2 (2R)-3-phosphoglycerate + 2 H(+) = D-ribulose 1,5-bisphosphate + CO2 + H2O. The enzyme catalyses D-ribulose 1,5-bisphosphate + O2 = 2-phosphoglycolate + (2R)-3-phosphoglycerate + 2 H(+). Functionally, ruBisCO catalyzes two reactions: the carboxylation of D-ribulose 1,5-bisphosphate, the primary event in carbon dioxide fixation, as well as the oxidative fragmentation of the pentose substrate in the photorespiration process. Both reactions occur simultaneously and in competition at the same active site. This chain is Ribulose bisphosphate carboxylase large chain, found in Nostoc sp. (strain PCC 7120 / SAG 25.82 / UTEX 2576).